The sequence spans 364 residues: DNA replication and repair protein RecF (364 aa).

30 to 37 (GKNAQGKT) contacts ATP.

The protein belongs to the RecF family.

Its subcellular location is the cytoplasm. Functionally, the RecF protein is involved in DNA metabolism; it is required for DNA replication and normal SOS inducibility. RecF binds preferentially to single-stranded, linear DNA. It also seems to bind ATP. The protein is DNA replication and repair protein RecF of Geotalea uraniireducens (strain Rf4) (Geobacter uraniireducens).